The primary structure comprises 223 residues: N-acetylmuramic acid 6-phosphate phosphatase (223 aa).

Catalysis depends on Asp9, which acts as the Nucleophile. Positions 9, 11, and 168 each coordinate Mg(2+). Asp11 (proton donor) is an active-site residue.

This sequence belongs to the HAD-like hydrolase superfamily. CbbY/CbbZ/Gph/YieH family. Phosphatase MupP subfamily. The cofactor is Mg(2+).

The enzyme catalyses N-acetyl-D-muramate 6-phosphate + H2O = N-acetyl-D-muramate + phosphate. The protein operates within cell wall biogenesis; peptidoglycan recycling. Specifically catalyzes the dephosphorylation of N-acetylmuramate 6-phosphate (MurNAc-6P) to MurNac. Is involved in peptidoglycan recycling as part of a cell wall recycling pathway that bypasses de novo biosynthesis of the peptidoglycan precursor UDP-MurNAc. Plays a role in intrinsic resistance to fosfomycin, which targets the de novo synthesis of UDP-MurNAc. Shows a very low activity on GlcNAc-6P, and neither alpha-1-phosphorylated MurNAc, GlcNAc, or glucose nor glucosamine-6P or glucose-6P can be used as a substrate. This chain is N-acetylmuramic acid 6-phosphate phosphatase, found in Pseudomonas putida (strain ATCC 47054 / DSM 6125 / CFBP 8728 / NCIMB 11950 / KT2440).